A 292-amino-acid polypeptide reads, in one-letter code: 4-hydroxy-tetrahydrodipicolinate synthase (292 aa).

T44 provides a ligand contact to pyruvate. Y132 (proton donor/acceptor) is an active-site residue. Residue K160 is the Schiff-base intermediate with substrate of the active site. I202 is a pyruvate binding site.

It belongs to the DapA family. As to quaternary structure, homotetramer; dimer of dimers.

The protein resides in the cytoplasm. The catalysed reaction is L-aspartate 4-semialdehyde + pyruvate = (2S,4S)-4-hydroxy-2,3,4,5-tetrahydrodipicolinate + H2O + H(+). It functions in the pathway amino-acid biosynthesis; L-lysine biosynthesis via DAP pathway; (S)-tetrahydrodipicolinate from L-aspartate: step 3/4. Catalyzes the condensation of (S)-aspartate-beta-semialdehyde [(S)-ASA] and pyruvate to 4-hydroxy-tetrahydrodipicolinate (HTPA). The sequence is that of 4-hydroxy-tetrahydrodipicolinate synthase from Magnetococcus marinus (strain ATCC BAA-1437 / JCM 17883 / MC-1).